The sequence spans 464 residues: E3 ubiquitin-protein ligase MYLIP-B (464 aa).

One can recognise an FERM domain in the interval 1–279 (MLCHITRPDS…EIHAFYRCDT (279 aa)). The segment at 381-416 (CALCCEQEISAAFCPCGHMFCCYNCASQLQCCPVCR) adopts an RING-type zinc-finger fold.

As to quaternary structure, interacts with anxa5.

The protein localises to the cytoplasm. Its subcellular location is the cytosol. The catalysed reaction is S-ubiquitinyl-[E2 ubiquitin-conjugating enzyme]-L-cysteine + [acceptor protein]-L-lysine = [E2 ubiquitin-conjugating enzyme]-L-cysteine + N(6)-ubiquitinyl-[acceptor protein]-L-lysine.. Its pathway is protein modification; protein ubiquitination. Its function is as follows. E3 ubiquitin-protein ligase that mediates ubiquitination and subsequent proteasomal degradation of myosin regulatory light chain (MRLC). Regulates cell movements during gastrulation by acting downstream of fz7 to antagonize the frizzled-signaling pathway. The polypeptide is E3 ubiquitin-protein ligase MYLIP-B (Danio rerio (Zebrafish)).